We begin with the raw amino-acid sequence, 207 residues long: Large ribosomal subunit protein uL4 (207 aa).

Positions 57–78 (VAGGGKKPWRQKGTGRARHGSI) are disordered. The span at 63 to 77 (KPWRQKGTGRARHGS) shows a compositional bias: basic residues.

Belongs to the universal ribosomal protein uL4 family. Part of the 50S ribosomal subunit.

In terms of biological role, one of the primary rRNA binding proteins, this protein initially binds near the 5'-end of the 23S rRNA. It is important during the early stages of 50S assembly. It makes multiple contacts with different domains of the 23S rRNA in the assembled 50S subunit and ribosome. Functionally, forms part of the polypeptide exit tunnel. The chain is Large ribosomal subunit protein uL4 from Onion yellows phytoplasma (strain OY-M).